Consider the following 348-residue polypeptide: VIP36-like protein (348 aa).

An N-terminal signal peptide occupies residues 1–44; that stretch reads MAATLGPLGSWQQWRRCLSARDGSRMLLLLLLLGSGQGPQQVGA. The Lumenal portion of the chain corresponds to 45 to 313; it reads GQTFEYLKRE…APLPPLSGLA (269 aa). One can recognise an L-type lectin-like domain in the interval 49–274; the sequence is EYLKREHSLS…DVISLKLFEL (226 aa). Residues Ser-93 and Asp-128 each contribute to the a carbohydrate site. The Ca(2+) site is built by Asp-159, Tyr-161, and Asn-163. Residue 161–163 participates in a carbohydrate binding; the sequence is YPN. N-linked (GlcNAc...) (high mannose) asparagine glycosylation occurs at Asn-181. His-188 lines the a carbohydrate pocket. Asp-191 is a Ca(2+) binding site. Cysteines 200 and 237 form a disulfide. An a carbohydrate-binding site is contributed by 258 to 260; that stretch reads GDL. A helical membrane pass occupies residues 314 to 336; that stretch reads LFLIVFFSLVFSVFAIVIGIILY. Residues 337 to 348 lie on the Cytoplasmic side of the membrane; that stretch reads NKWQEQSRKRFY. The short motif at 344-346 is the Endoplasmic reticulum retention signal element; that stretch reads RKR.

As to expression, expressed in numerous tissues. Highest expression in skeletal muscle and kidney, intermediate levels in heart, liver and placenta, low levels in brain, thymus, spleen, small intestine and lung.

The protein resides in the endoplasmic reticulum membrane. It localises to the golgi apparatus membrane. May be involved in the regulation of export from the endoplasmic reticulum of a subset of glycoproteins. May function as a regulator of ERGIC-53. In Homo sapiens (Human), this protein is VIP36-like protein (LMAN2L).